The sequence spans 385 residues: Glucose-fructose oxidoreductase domain-containing protein 2 (385 aa).

The signal sequence occupies residues 1–25 (MKMLPGVGVFGTGSSARVLVPLLRA).

The protein belongs to the Gfo/Idh/MocA family.

It is found in the secreted. The protein resides in the extracellular space. The protein localises to the extracellular matrix. Promotes matrix assembly. This is Glucose-fructose oxidoreductase domain-containing protein 2 (GFOD2) from Homo sapiens (Human).